A 159-amino-acid polypeptide reads, in one-letter code: Ornithine decarboxylase antizyme (159 aa).

The protein belongs to the ODC antizyme family. Interacts with ODC1 and thereby sterically blocks ODC homodimerization.

Functionally, ornithine decarboxylase (ODC) antizyme protein that negatively regulates ODC activity and intracellular polyamine biosynthesis and uptake in response to increased intracellular polyamine levels. Binds to ODC monomers, inhibiting the assembly of the functional ODC homodimer, and targets the monomers for ubiquitin-independent proteolytic destruction by the 26S proteasome. In Caenorhabditis elegans, this protein is Ornithine decarboxylase antizyme.